A 312-amino-acid chain; its full sequence is Porphobilinogen deaminase (312 aa).

Cys241 is subject to S-(dipyrrolylmethanemethyl)cysteine.

This sequence belongs to the HMBS family. In terms of assembly, monomer. Dipyrromethane serves as cofactor.

The catalysed reaction is 4 porphobilinogen + H2O = hydroxymethylbilane + 4 NH4(+). Its pathway is porphyrin-containing compound metabolism; protoporphyrin-IX biosynthesis; coproporphyrinogen-III from 5-aminolevulinate: step 2/4. Functionally, tetrapolymerization of the monopyrrole PBG into the hydroxymethylbilane pre-uroporphyrinogen in several discrete steps. In Aliarcobacter butzleri (strain RM4018) (Arcobacter butzleri), this protein is Porphobilinogen deaminase.